Here is a 144-residue protein sequence, read N- to C-terminus: MYPAHLLVLLAVCVSLLGASDIPPLPLNLYQFDNMIQCANKGKRATWHYMDYGCYCGSGGSGTPVDALDRCCKAHDDCYGVAEDNGCYPKWTLYSWQCTENVPTCNSESGCQKSVCACDATAAKCFAEAPYNNKNYNINTSNCQ.

Positions 1–19 (MYPAHLLVLLAVCVSLLGA) are cleaved as a signal peptide. A propeptide spanning residues 20–27 (SDIPPLPL) is cleaved from the precursor. Disulfide bonds link Cys38/Cys98, Cys54/Cys143, Cys56/Cys72, Cys71/Cys125, Cys78/Cys118, Cys87/Cys111, and Cys105/Cys116. Ca(2+)-binding residues include Tyr55, Gly57, and Gly59. Residue His75 is part of the active site. Residue Asp76 coordinates Ca(2+). The active site involves Asp119.

The protein belongs to the phospholipase A2 family. Group I subfamily. D49 sub-subfamily. Ca(2+) is required as a cofactor. Expressed by the venom gland.

It localises to the secreted. The enzyme catalyses a 1,2-diacyl-sn-glycero-3-phosphocholine + H2O = a 1-acyl-sn-glycero-3-phosphocholine + a fatty acid + H(+). Functionally, PLA2 catalyzes the calcium-dependent hydrolysis of the 2-acyl groups in 3-sn-phosphoglycerides. The protein is Acidic phospholipase A2 of Aipysurus laevis (Olive sea snake).